A 429-amino-acid polypeptide reads, in one-letter code: Formate-dependent phosphoribosylglycinamide formyltransferase (429 aa).

N(1)-(5-phospho-beta-D-ribosyl)glycinamide-binding positions include 26 to 27 and E86; that span reads EL. ATP contacts are provided by residues R118, K159, 199 to 202, and E207; that span reads EEHI. The ATP-grasp domain maps to 123–319; that stretch reads ETLVKEAKVP…EFGLHLRAVL (197 aa). 2 residues coordinate Mg(2+): E276 and E288. Residues D295, K375, and 382–383 contribute to the N(1)-(5-phospho-beta-D-ribosyl)glycinamide site; that span reads RR.

It belongs to the PurK/PurT family. Homodimer.

It catalyses the reaction N(1)-(5-phospho-beta-D-ribosyl)glycinamide + formate + ATP = N(2)-formyl-N(1)-(5-phospho-beta-D-ribosyl)glycinamide + ADP + phosphate + H(+). The protein operates within purine metabolism; IMP biosynthesis via de novo pathway; N(2)-formyl-N(1)-(5-phospho-D-ribosyl)glycinamide from N(1)-(5-phospho-D-ribosyl)glycinamide (formate route): step 1/1. Its function is as follows. Involved in the de novo purine biosynthesis. Catalyzes the transfer of formate to 5-phospho-ribosyl-glycinamide (GAR), producing 5-phospho-ribosyl-N-formylglycinamide (FGAR). Formate is provided by PurU via hydrolysis of 10-formyl-tetrahydrofolate. This chain is Formate-dependent phosphoribosylglycinamide formyltransferase, found in Pyrococcus furiosus (strain ATCC 43587 / DSM 3638 / JCM 8422 / Vc1).